The chain runs to 194 residues: Large ribosomal subunit protein eL15 (194 aa).

The disordered stretch occupies residues 165–194 (AGKKGRGLRNKGKGAEKVRPSIRANEGKGK). Residues 167–176 (KKGRGLRNKG) are compositionally biased toward basic residues. Residues 177–194 (KGAEKVRPSIRANEGKGK) show a composition bias toward basic and acidic residues.

The protein belongs to the eukaryotic ribosomal protein eL15 family. As to quaternary structure, part of the 50S ribosomal subunit.

The protein is Large ribosomal subunit protein eL15 of Pyrococcus furiosus (strain ATCC 43587 / DSM 3638 / JCM 8422 / Vc1).